The primary structure comprises 243 residues: High affinity immunoglobulin epsilon receptor subunit beta (243 aa).

The tract at residues 1 to 48 (MDTENKSRADLALPNPQESPSAPDIELLEASPPAKALPEKPASPPPQQ) is disordered. Residues 1–59 (MDTENKSRADLALPNPQESPSAPDIELLEASPPAKALPEKPASPPPQQTWQSFLKKELE) lie on the Cytoplasmic side of the membrane. The helical transmembrane segment at 60–79 (FLGVTQVLVGLICLCFGTVV) threads the bilayer. At 80 to 97 (CSTLQTSDFDDEVLLLYR) the chain is on the extracellular side. The helical transmembrane segment at 98–117 (AGYPFWGAVLFVLSGFLSIM) threads the bilayer. Over 118 to 130 (SERKNTLYLVRGS) the chain is Cytoplasmic. A helical membrane pass occupies residues 131–150 (LGANIVSSIAAGLGIAILIL). Over 151-179 (NLSNNSAYMNYCKDITEDDGCFVTSFITE) the chain is Extracellular. Residues 180–199 (LVLMLLFLTILAFCSAVLLI) form a helical membrane-spanning segment. At 200–243 (IYRIGQEFERSKVPDDRLYEELHVYSPIYSALEDTREASAPVVS) the chain is on the cytoplasmic side. A phosphotyrosine mark is found at Tyr-218 and Tyr-224. Residue Ser-225 is modified to Phosphoserine. A Phosphotyrosine modification is found at Tyr-228.

The protein belongs to the MS4A family. As to quaternary structure, tetramer of an alpha chain, a beta chain, and two disulfide linked gamma chains. Binds LILRB1. Interacts with FES/FPS and LYN. Interacts with FGR. In terms of processing, phosphorylated on tyrosine residues by LYN.

It is found in the membrane. Its function is as follows. High affinity receptor that binds to the Fc region of immunoglobulins epsilon. Aggregation of FCER1 by multivalent antigens is required for the full mast cell response, including the release of preformed mediators (such as histamine) by degranulation and de novo production of lipid mediators and cytokines. Also mediates the secretion of important lymphokines. Binding of allergen to receptor-bound IgE leads to cell activation and the release of mediators responsible for the manifestations of allergy. This chain is High affinity immunoglobulin epsilon receptor subunit beta (Ms4a2), found in Rattus norvegicus (Rat).